Reading from the N-terminus, the 1061-residue chain is Transmembrane protease serine 9 (1061 aa).

Residues 3 to 31 (PAAPDLQPVPEVTKGVPVPTPDSGCCRAA) lie on the Cytoplasmic side of the membrane. Residues 32–52 (VTTVVAISVASLTLGVLSAFL) form a helical membrane-spanning segment. Residues 53–1061 (SAQGVQVEHT…LGWIGQNIRE (1009 aa)) lie on the Extracellular side of the membrane. The 38-residue stretch at 155 to 192 (HCPGNAFSCQNSQCVSKENPECDDRVDCSDGSDEAQCD) folds into the LDL-receptor class A domain. Disulfide bonds link cysteine 156–cysteine 168, cysteine 163–cysteine 182, cysteine 176–cysteine 191, and cysteine 230–cysteine 246. The region spanning 205–438 (IVGGAEAAPG…LRDWILEVTS (234 aa)) is the Peptidase S1 1 domain. Catalysis depends on charge relay system residues histidine 245 and aspartate 294. 3 disulfides stabilise this stretch: cysteine 328–cysteine 395, cysteine 360–cysteine 374, and cysteine 385–cysteine 414. Catalysis depends on serine 389, which acts as the Charge relay system. A disordered region spans residues 443 to 499 (PVVPTEAPAPITPSTPWPTSPESRVPNTTAKPTVAPTPAPLHPSTAAKPQECGARPA). The span at 452 to 461 (PITPSTPWPT) shows a compositional bias: pro residues. The segment covering 462–476 (SPESRVPNTTAKPTV) has biased composition (low complexity). A glycan (N-linked (GlcNAc...) asparagine) is linked at asparagine 469. Residues 506-738 (IVGGISAVSG…LKDWILKAMS (233 aa)) enclose the Peptidase S1 2 domain. A disulfide bridge connects residues cysteine 531 and cysteine 547. Histidine 546 acts as the Charge relay system in catalysis. Asparagine 549 carries an N-linked (GlcNAc...) asparagine glycan. Residue aspartate 594 is the Charge relay system of the active site. Cystine bridges form between cysteine 628–cysteine 695, cysteine 660–cysteine 674, and cysteine 685–cysteine 714. Asparagine 640 and asparagine 665 each carry an N-linked (GlcNAc...) asparagine glycan. The active-site Charge relay system is serine 689. Low complexity predominate over residues 740-752 (DPSSTAHPHTSST). Disordered regions lie at residues 740-771 (DPSS…IPEA) and 790-810 (LNTT…APGT). N-linked (GlcNAc...) asparagine glycosylation is present at asparagine 791. Low complexity predominate over residues 792-808 (TTLSARSTTTRRQTPAP). Residues 830–1060 (IVGGSAASLG…VLGWIGQNIR (231 aa)) form the Peptidase S1 3 domain. Intrachain disulfides connect cysteine 856–cysteine 872, cysteine 951–cysteine 1017, cysteine 982–cysteine 996, and cysteine 1007–cysteine 1036.

The protein belongs to the peptidase S1 family. Post-translationally, proteolytically cleaved to generate 3 independent serine protease chains. The cleaved chains may remain attached to the membrane thanks to disulfide bonds. It is unclear whether cleavage always takes place.

It is found in the cell membrane. With respect to regulation, inhibited by serine protease inhibitors PMSF and 4-(2-aminoethyl)benzenesulfonyl fluoride, but not by EDTA. Functionally, serase-1 and serase-2 are serine proteases that hydrolyze the peptides N-t-Boc-Gln-Ala-Arg-AMC and N-t-Boc-Gln-Gly-Arg-AMC. In contrast, N-t-Boc-Ala-Phe-Lys-AMC and N-t-Boc-Ala-Pro-Ala-AMC are not significantly hydrolyzed. The protein is Transmembrane protease serine 9 (Tmprss9) of Rattus norvegicus (Rat).